The primary structure comprises 348 residues: UDP-rhamnose/UDP-galactose transporter 2 (348 aa).

10 helical membrane passes run 12-32 (AVSD…IIMA), 44-64 (FSFA…VGMV), 81-101 (LLWF…SLML), 104-124 (VGFY…MEWV), 133-153 (EVKA…VTDV), 160-180 (FICA…IGSL), 196-216 (APIQ…FLSG), 230-250 (LCIL…YLCI), 257-277 (SFQV…WLIF), and 286-306 (IAGM…VELE).

The protein belongs to the TPT transporter family. TPT (TC 2.A.7.9) subfamily.

The protein localises to the golgi apparatus membrane. Functionally, nucleotide-sugar transporter that transports UDP-rhamnose or UDP-galactose and UMP in a strict counter-exchange mode. The sequence is that of UDP-rhamnose/UDP-galactose transporter 2 from Arabidopsis thaliana (Mouse-ear cress).